An 819-amino-acid polypeptide reads, in one-letter code: Ion-translocating oxidoreductase complex subunit C (819 aa).

4Fe-4S ferredoxin-type domains are found at residues glutamate 368–tyrosine 398 and lysine 408–phenylalanine 437. [4Fe-4S] cluster is bound by residues cysteine 378, cysteine 381, cysteine 384, cysteine 388, cysteine 417, cysteine 420, cysteine 423, and cysteine 427. Composition is skewed to basic and acidic residues over residues glutamine 465–alanine 477 and alanine 485–glutamate 513. 3 disordered regions span residues glutamine 465–lysine 568, alanine 580–aspartate 677, and alanine 692–alanine 793. 2 stretches are compositionally biased toward polar residues: residues valine 554–asparagine 565 and asparagine 587–asparagine 601. Residues glutamine 602–glutamine 614 are compositionally biased toward basic and acidic residues. The segment covering glutamine 641–glutamate 656 has biased composition (polar residues). Basic and acidic residues predominate over residues glutamate 658–glutamate 671. 2 stretches are compositionally biased toward polar residues: residues asparagine 699–glutamate 712 and asparagine 755–glutamate 768. The segment covering glutamate 770 to glutamine 782 has biased composition (basic and acidic residues).

Belongs to the 4Fe4S bacterial-type ferredoxin family. RnfC subfamily. In terms of assembly, the complex is composed of six subunits: RnfA, RnfB, RnfC, RnfD, RnfE and RnfG. Requires [4Fe-4S] cluster as cofactor.

It is found in the cell inner membrane. In terms of biological role, part of a membrane-bound complex that couples electron transfer with translocation of ions across the membrane. The polypeptide is Ion-translocating oxidoreductase complex subunit C (Haemophilus influenzae (strain ATCC 51907 / DSM 11121 / KW20 / Rd)).